The primary structure comprises 309 residues: Elongation factor Ts (309 aa).

Positions 98 to 101 (TDFV) are involved in Mg(2+) ion dislocation from EF-Tu.

It belongs to the EF-Ts family.

The protein localises to the cytoplasm. In terms of biological role, associates with the EF-Tu.GDP complex and induces the exchange of GDP to GTP. It remains bound to the aminoacyl-tRNA.EF-Tu.GTP complex up to the GTP hydrolysis stage on the ribosome. The polypeptide is Elongation factor Ts (Orientia tsutsugamushi (strain Boryong) (Rickettsia tsutsugamushi)).